The following is a 356-amino-acid chain: sn-glycerol-3-phosphate import ATP-binding protein UgpC (356 aa).

In terms of domain architecture, ABC transporter spans 4–235 (LKLQAVTKSW…PASLFVASFI (232 aa)). Residue 37 to 44 (GPSGCGKS) participates in ATP binding.

This sequence belongs to the ABC transporter superfamily. sn-glycerol-3-phosphate importer (TC 3.A.1.1.3) family. As to quaternary structure, the complex is composed of two ATP-binding proteins (UgpC), two transmembrane proteins (UgpA and UgpE) and a solute-binding protein (UgpB).

Its subcellular location is the cell inner membrane. The enzyme catalyses sn-glycerol 3-phosphate(out) + ATP + H2O = sn-glycerol 3-phosphate(in) + ADP + phosphate + H(+). In terms of biological role, part of the ABC transporter complex UgpBAEC involved in sn-glycerol-3-phosphate (G3P) import. Responsible for energy coupling to the transport system. In Escherichia coli (strain UTI89 / UPEC), this protein is sn-glycerol-3-phosphate import ATP-binding protein UgpC.